The following is a 548-amino-acid chain: uncharacterized protein (548 aa).

Residues 1–24 form the signal peptide; that stretch reads MKKATKLLLSILPISSISFLSVVS. C25 carries N-palmitoyl cysteine lipidation. C25 carries S-diacylglycerol cysteine lipidation. The disordered stretch occupies residues 26–129; sequence STRNSNAKQP…NNQHADQPNI (104 aa). Basic and acidic residues predominate over residues 34 to 44; sequence QPDKKPEKPNE. The span at 58–78 shows a compositional bias: low complexity; sequence PTNNNNNSNNNSNSNNNKPGS. Residues 83–109 are compositionally biased toward basic and acidic residues; that stretch reads ENKDPSKSEETPEKPERDPKKPDKQPQ. A compositionally biased stretch (low complexity) spans 110 to 128; it reads GDDPNNHQPHNNQHADQPN.

It belongs to the mycoplasma p72 lipoprotein family.

It localises to the cell membrane. This is an uncharacterized protein from Mycoplasma mycoides subsp. mycoides SC (strain CCUG 32753 / NCTC 10114 / PG1).